The sequence spans 288 residues: Elongation factor Ts (288 aa).

An involved in Mg(2+) ion dislocation from EF-Tu region spans residues 82 to 85 (TDFV).

It belongs to the EF-Ts family.

It localises to the cytoplasm. Functionally, associates with the EF-Tu.GDP complex and induces the exchange of GDP to GTP. It remains bound to the aminoacyl-tRNA.EF-Tu.GTP complex up to the GTP hydrolysis stage on the ribosome. In Chlorobium phaeovibrioides (strain DSM 265 / 1930) (Prosthecochloris vibrioformis (strain DSM 265)), this protein is Elongation factor Ts.